A 311-amino-acid polypeptide reads, in one-letter code: DNA-directed RNA polymerase subunit alpha (311 aa).

The alpha N-terminal domain (alpha-NTD) stretch occupies residues M1–T226. Residues D243–K311 are alpha C-terminal domain (alpha-CTD).

Belongs to the RNA polymerase alpha chain family. Homodimer. The RNAP catalytic core consists of 2 alpha, 1 beta, 1 beta' and 1 omega subunit. When a sigma factor is associated with the core the holoenzyme is formed, which can initiate transcription.

The enzyme catalyses RNA(n) + a ribonucleoside 5'-triphosphate = RNA(n+1) + diphosphate. In terms of biological role, DNA-dependent RNA polymerase catalyzes the transcription of DNA into RNA using the four ribonucleoside triphosphates as substrates. The sequence is that of DNA-directed RNA polymerase subunit alpha from Streptococcus pneumoniae serotype 4 (strain ATCC BAA-334 / TIGR4).